A 104-amino-acid chain; its full sequence is L-rhamnose mutarotase (104 aa).

Residue Tyr18 participates in substrate binding. His22 acts as the Proton donor in catalysis. Residues Tyr41 and 76 to 77 contribute to the substrate site; that span reads WW.

This sequence belongs to the rhamnose mutarotase family. Homodimer.

Its subcellular location is the cytoplasm. The enzyme catalyses alpha-L-rhamnose = beta-L-rhamnose. It participates in carbohydrate metabolism; L-rhamnose metabolism. Its function is as follows. Involved in the anomeric conversion of L-rhamnose. The chain is L-rhamnose mutarotase from Tolumonas auensis (strain DSM 9187 / NBRC 110442 / TA 4).